We begin with the raw amino-acid sequence, 318 residues long: Annexin D6 (318 aa).

Alanine 2 is modified (N-acetylalanine). Annexin repeat units follow at residues 11-82 (PLPE…LWTL), 83-154 (DPTE…PLVS), 168-239 (KLAR…TAIK), and 243-314 (YPEK…ALLG). Ca(2+) is bound by residues phenylalanine 24, glycine 26, glycine 28, and glutamate 68. Serine 95 is modified (phosphoserine). Phosphothreonine occurs at positions 100 and 112. Phosphotyrosine is present on tyrosine 129. Residues isoleucine 256, arginine 258, and glycine 260 each contribute to the Ca(2+) site. Tyrosine 285 carries the phosphotyrosine modification. A Phosphoserine modification is found at serine 290. Positions 300 and 301 each coordinate Ca(2+).

The protein belongs to the annexin (TC 1.A.31.1) family. Expressed in flowers.

The protein is Annexin D6 (ANN6) of Arabidopsis thaliana (Mouse-ear cress).